The following is a 474-amino-acid chain: Melanopsin (474 aa).

Residues 1–72 are Extracellular-facing; it reads MNSPSESRVP…VDVPDHAHYT (72 aa). N31 and N35 each carry an N-linked (GlcNAc...) asparagine glycan. The helical transmembrane segment at 73–93 threads the bilayer; it reads LGTVILLVGLTGMLGNLTVIY. Topologically, residues 94–107 are cytoplasmic; sequence TFCRNRGLRTPANM. The chain crosses the membrane as a helical span at residues 108–128; it reads LIINLAVSDFLMSFTQAPVFF. Topologically, residues 129–144 are extracellular; sequence ASSLYKKWLFGETGCK. C143 and C221 are disulfide-bonded. A helical transmembrane segment spans residues 145 to 165; that stretch reads FYAFCGAVFGIVSMITLTAIA. Residues 166–188 lie on the Cytoplasmic side of the membrane; the sequence is MDRYLVITRPLATIGMRSKRRTA. Residues 189-209 form a helical membrane-spanning segment; the sequence is LVLLGVWLYALAWSLPPFFGW. Residues 210–238 lie on the Extracellular side of the membrane; it reads SAYVPEGLLTSCSWDYVTFTPLVRAYTML. A helical membrane pass occupies residues 239 to 259; sequence LFCFVFFLPLLIIIFCYIFIF. The Cytoplasmic segment spans residues 260 to 293; sequence RAIRETGRACEGCGESPLRRRQWQRLQSEWKMAK. Residues 294–314 traverse the membrane as a helical segment; sequence VALIVILLFVLSWAPYSTVAL. The Extracellular segment spans residues 315–355; it reads VGFAGYSHILTPYMSSVPAVIAKASAIHNPIIYAITHPKYR. K337 bears the N6-(retinylidene)lysine mark. A helical transmembrane segment spans residues 356–372; sequence AAIAQHLPCLGVLLGVS. Residues 373–474 are Cytoplasmic-facing; the sequence is GQRSHPSLSY…RHLPSLDRRM (102 aa). Residues 428 to 474 are disordered; it reads AAQQASGQSFCSHDLEDGEVKAPSSPQEQKSKTPKTKRHLPSLDRRM.

Belongs to the G-protein coupled receptor 1 family. Opsin subfamily. In terms of tissue distribution, eye; expressed in a photosensitive subset of retinal ganglion cells (at protein level).

Its subcellular location is the cell membrane. The protein resides in the cell projection. The protein localises to the axon. It is found in the dendrite. It localises to the perikaryon. In terms of biological role, photoreceptor that binds cis-retinaldehydes. Contributes to pupillar reflex, photoentrainment and other non-image forming responses to light. May be involved in the optokinetic visual tracking response. May be involved in the regulation of retinal hyaloid vessel growth and regression. This is Melanopsin from Rattus norvegicus (Rat).